A 702-amino-acid polypeptide reads, in one-letter code: A-type inclusion protein A25 homolog (702 aa).

Residues threonine 342–proline 380 are disordered. The span at glutamate 347–proline 360 shows a compositional bias: basic and acidic residues. Coiled coils occupy residues asparagine 420–lysine 522 and glutamate 548–threonine 692.

It belongs to the poxviridae A25 protein family. In terms of assembly, interacts (via N-terminus) with protein A26.

The protein resides in the virion. Structural protein that forms a matrix surrounding the mature virion (MV) through interaction with protein A26. Presence of protein A25 in the virion structurally prevents direct virus-cell fusion mechanism. In Variola virus (isolate Human/India/Ind3/1967) (VARV), this protein is A-type inclusion protein A25 homolog.